Here is a 215-residue protein sequence, read N- to C-terminus: Ribonuclease HII (215 aa).

An RNase H type-2 domain is found at 19–214 (KNVIGVDEAG…KILETEEEKT (196 aa)). The a divalent metal cation site is built by D25, E26, and D121.

Belongs to the RNase HII family. Mn(2+) is required as a cofactor. The cofactor is Mg(2+).

It is found in the cytoplasm. It catalyses the reaction Endonucleolytic cleavage to 5'-phosphomonoester.. Endonuclease that specifically degrades the RNA of RNA-DNA hybrids. This chain is Ribonuclease HII, found in Fusobacterium nucleatum subsp. nucleatum (strain ATCC 25586 / DSM 15643 / BCRC 10681 / CIP 101130 / JCM 8532 / KCTC 2640 / LMG 13131 / VPI 4355).